A 496-amino-acid polypeptide reads, in one-letter code: UDP-N-acetylmuramoylalanine--D-glutamate ligase (496 aa).

130 to 136 (GTNGKTT) serves as a coordination point for ATP.

Belongs to the MurCDEF family. As to quaternary structure, interacts with PknA. Phosphorylated by PknA.

The protein localises to the cytoplasm. It carries out the reaction UDP-N-acetyl-alpha-D-muramoyl-L-alanine + D-glutamate + ATP = UDP-N-acetyl-alpha-D-muramoyl-L-alanyl-D-glutamate + ADP + phosphate + H(+). The protein operates within cell wall biogenesis; peptidoglycan biosynthesis. Its function is as follows. Cell wall formation. Catalyzes the addition of glutamate to the nucleotide precursor UDP-N-acetylmuramoyl-L-alanine (UMA). The polypeptide is UDP-N-acetylmuramoylalanine--D-glutamate ligase (Mycobacterium tuberculosis (strain ATCC 25177 / H37Ra)).